We begin with the raw amino-acid sequence, 288 residues long: ATP synthase gamma chain (288 aa).

It belongs to the ATPase gamma chain family. F-type ATPases have 2 components, CF(1) - the catalytic core - and CF(0) - the membrane proton channel. CF(1) has five subunits: alpha(3), beta(3), gamma(1), delta(1), epsilon(1). CF(0) has three main subunits: a, b and c.

It localises to the cell inner membrane. Its function is as follows. Produces ATP from ADP in the presence of a proton gradient across the membrane. The gamma chain is believed to be important in regulating ATPase activity and the flow of protons through the CF(0) complex. The polypeptide is ATP synthase gamma chain (Legionella pneumophila (strain Paris)).